The following is a 263-amino-acid chain: Small ribosomal subunit protein uS15m (263 aa).

The transit peptide at 1-70 (MVLKSVFRST…VRQYARPSRK (70 aa)) directs the protein to the mitochondrion. Over residues 238-251 (EREKQKAEEAERKK) the composition is skewed to basic and acidic residues. The segment at 238–263 (EREKQKAEEAERKKSSSSTNPQETAA) is disordered.

The protein belongs to the universal ribosomal protein uS15 family. In terms of assembly, component of the mitochondrial ribosome small subunit (28S) which comprises a 12S rRNA and about 30 distinct proteins.

It localises to the mitochondrion. In Danio rerio (Zebrafish), this protein is Small ribosomal subunit protein uS15m (mrps15).